The sequence spans 155 residues: MRIGLGYDVHKLVEDRPLIIGGVTIPHDKGLLGHSDADVLVHAIMDALLGAAALGDIGKHFPDSDKNFKNISSLLLLSKVKDLINKEGYKIVNIDCTIIAQKPKMLYHIDAMKKNICKCLKLDNNMLNIKATTEEGLGFTGKEEGISANAICLLD.

A divalent metal cation-binding residues include Asp-8 and His-10. Residues 8–10 and 34–35 contribute to the 4-CDP-2-C-methyl-D-erythritol 2-phosphate site; these read DVH and HS. His-42 is an a divalent metal cation binding site. 4-CDP-2-C-methyl-D-erythritol 2-phosphate contacts are provided by residues 56 to 58, 61 to 65, 100 to 106, 132 to 135, Phe-139, and Lys-142; these read DIG, FPDSD, AQKPKML, and TTEE.

Belongs to the IspF family. In terms of assembly, homotrimer. It depends on a divalent metal cation as a cofactor.

The catalysed reaction is 4-CDP-2-C-methyl-D-erythritol 2-phosphate = 2-C-methyl-D-erythritol 2,4-cyclic diphosphate + CMP. The protein operates within isoprenoid biosynthesis; isopentenyl diphosphate biosynthesis via DXP pathway; isopentenyl diphosphate from 1-deoxy-D-xylulose 5-phosphate: step 4/6. Functionally, involved in the biosynthesis of isopentenyl diphosphate (IPP) and dimethylallyl diphosphate (DMAPP), two major building blocks of isoprenoid compounds. Catalyzes the conversion of 4-diphosphocytidyl-2-C-methyl-D-erythritol 2-phosphate (CDP-ME2P) to 2-C-methyl-D-erythritol 2,4-cyclodiphosphate (ME-CPP) with a corresponding release of cytidine 5-monophosphate (CMP). The chain is 2-C-methyl-D-erythritol 2,4-cyclodiphosphate synthase from Clostridium botulinum (strain Kyoto / Type A2).